A 192-amino-acid chain; its full sequence is dTDP-3-amino-3,6-dideoxy-alpha-D-galactopyranose 3-N-acetyltransferase (192 aa).

The protein belongs to the transferase hexapeptide repeat family.

It carries out the reaction dTDP-3-amino-3,6-dideoxy-alpha-D-galactopyranose + acetyl-CoA = dTDP-3-acetamido-3,6-dideoxy-alpha-D-galactopyranose + CoA + H(+). Catalyzes the transfer of an acetyl group to dTDP-D-Fucp3N to form dTDP-D-Fucp3NAc in the biosynthesis of dTDP-3-acetamido-3,6-dideoxy-alpha-D-galactose, a glycan chain of the S-layer. The chain is dTDP-3-amino-3,6-dideoxy-alpha-D-galactopyranose 3-N-acetyltransferase (fdtC) from Aneurinibacillus thermoaerophilus.